Consider the following 89-residue polypeptide: Small ribosomal subunit protein uS15 (89 aa).

It belongs to the universal ribosomal protein uS15 family. As to quaternary structure, part of the 30S ribosomal subunit. Forms a bridge to the 50S subunit in the 70S ribosome, contacting the 23S rRNA.

Its function is as follows. One of the primary rRNA binding proteins, it binds directly to 16S rRNA where it helps nucleate assembly of the platform of the 30S subunit by binding and bridging several RNA helices of the 16S rRNA. In terms of biological role, forms an intersubunit bridge (bridge B4) with the 23S rRNA of the 50S subunit in the ribosome. In Photorhabdus laumondii subsp. laumondii (strain DSM 15139 / CIP 105565 / TT01) (Photorhabdus luminescens subsp. laumondii), this protein is Small ribosomal subunit protein uS15.